Consider the following 344-residue polypeptide: L-rhamnose-proton symporter (344 aa).

Transmembrane regions (helical) follow at residues 4–24, 38–58, 68–88, 101–121, 137–157, 175–195, 214–234, 259–279, 290–310, and 323–343; these read AITM…CFYA, WSVG…ALLL, FSLS…IGNI, MGIG…TPII, TLLG…AGQL, LVLA…MNAA, LPSY…FCFI, VLLS…YAWG, ISWM…GLVL, and VLSL…IGMA.

Belongs to the L-rhamnose transporter (TC 2.A.7.6) family.

The protein localises to the cell inner membrane. It carries out the reaction L-rhamnopyranose(in) + H(+)(in) = L-rhamnopyranose(out) + H(+)(out). Functionally, uptake of L-rhamnose across the cytoplasmic membrane with the concomitant transport of protons into the cell (symport system). The protein is L-rhamnose-proton symporter of Shigella boydii serotype 18 (strain CDC 3083-94 / BS512).